The sequence spans 268 residues: Interleukin-1 beta (268 aa).

Residues 1–116 (MATVPELNCE…WDDDDLLVCD (116 aa)) constitute a propeptide that is removed on maturation.

Belongs to the IL-1 family. In terms of assembly, monomer. In its precursor form, weakly interacts with full-length MEFV; the mature cytokine does not interact at all. Interacts with integrins ITGAV:ITGBV and ITGA5:ITGB1; integrin-binding is required for IL1B signaling. Interacts with cargo receptor TMED10; the interaction is direct and is required for the secretion of IL1B mature form. Interacts with HSP90AB1; the interaction facilitates cargo translocation into the ERGIC. Interacts with HSP90B1; the interaction facilitates cargo translocation into the ERGIC.

Its subcellular location is the cytoplasm. It is found in the cytosol. The protein resides in the secreted. It localises to the lysosome. The protein localises to the extracellular exosome. Its function is as follows. Potent pro-inflammatory cytokine. Initially discovered as the major endogenous pyrogen, induces prostaglandin synthesis, neutrophil influx and activation, T-cell activation and cytokine production, B-cell activation and antibody production, and fibroblast proliferation and collagen production. Promotes Th17 differentiation of T-cells. Synergizes with IL12/interleukin-12 to induce IFNG synthesis from T-helper 1 (Th1) cells. Plays a role in angiogenesis by inducing VEGF production synergistically with TNF and IL6. Involved in transduction of inflammation downstream of pyroptosis: its mature form is specifically released in the extracellular milieu by passing through the gasdermin-D (GSDMD) pore. This is Interleukin-1 beta from Rattus norvegicus (Rat).